A 621-amino-acid chain; its full sequence is DNA-directed RNA polymerase subunit gamma (621 aa).

3 residues coordinate Mg(2+): Asp463, Asp465, and Asp467.

This sequence belongs to the RNA polymerase beta' chain family. RpoC1 subfamily. As to quaternary structure, in cyanobacteria the RNAP catalytic core is composed of 2 alpha, 1 beta, 1 beta', 1 gamma and 1 omega subunit. When a sigma factor is associated with the core the holoenzyme is formed, which can initiate transcription. It depends on Mg(2+) as a cofactor.

It carries out the reaction RNA(n) + a ribonucleoside 5'-triphosphate = RNA(n+1) + diphosphate. Its function is as follows. DNA-dependent RNA polymerase catalyzes the transcription of DNA into RNA using the four ribonucleoside triphosphates as substrates. The sequence is that of DNA-directed RNA polymerase subunit gamma from Nostoc commune.